A 230-amino-acid polypeptide reads, in one-letter code: Large ribosomal subunit protein uL1 (230 aa).

The protein belongs to the universal ribosomal protein uL1 family. Part of the 50S ribosomal subunit.

Its function is as follows. Binds directly to 23S rRNA. The L1 stalk is quite mobile in the ribosome, and is involved in E site tRNA release. In terms of biological role, protein L1 is also a translational repressor protein, it controls the translation of the L11 operon by binding to its mRNA. The polypeptide is Large ribosomal subunit protein uL1 (Leptospira biflexa serovar Patoc (strain Patoc 1 / Ames)).